The primary structure comprises 472 residues: MPNENAEDLSGQELKQKAKEVADASEAMLEKVVAGLNIQDTASTNAAGNEDAEQPDGAKNEASVSANASKQALLQAVSDAMASTRQMAKKFAFWSTQPVTKLDEQVTTNECIEPNKEISEIRALPYTLPGGFKWVTLDLNDANDLKELYTLLNENYVEDDDAMFRFDYQPEFLKWSLQPPGWKRDWHVGVRVEKSGKLVGFISAIPSKLKSYDKVLKVVDINFLCVHKKLRSKRVAPVLIREITRRVNLTGIFQAAYTAGVVLPTPVATCRYWHRSLNPKKLVDVRFSHLARNMTMQRTMKLYKLPDQPKTKGYRRITAKDMDKAHKLLEDYLKRFQLSPVFSKEEFRHWFTPKEGIIDCFVVADEKGNITDLTSYYCLPSSVMHHPVHKTVRAAYSFYNVSTKTPWLDLMNDALISARNVQMDVYNALDLMENKKYFAPLKFGAGDGNLQYYLYNWRCPSMQPEEIALILM.

2 disordered regions span residues methionine 1 to aspartate 23 and serine 43 to serine 65. Residues phenylalanine 93, tryptophan 94, phenylalanine 223, leucine 224, cysteine 225, valine 226, serine 232, arginine 234, valine 235, and alanine 236 each coordinate tetradecanoyl-CoA.

It belongs to the NMT family.

The protein localises to the membrane. The catalysed reaction is N-terminal glycyl-[protein] + tetradecanoyl-CoA = N-tetradecanoylglycyl-[protein] + CoA + H(+). Adds a myristoyl group (tetradecanoyl group) to the N-terminal glycine residue of certain cellular proteins. Such protein modification are critical for the developmental processes that involve cell shape changes and movement. This Drosophila melanogaster (Fruit fly) protein is Glycylpeptide N-tetradecanoyltransferase (Nmt).